The primary structure comprises 85 residues: Small ribosomal subunit protein bS18c (85 aa).

The protein belongs to the bacterial ribosomal protein bS18 family. As to quaternary structure, part of the 30S ribosomal subunit.

The protein localises to the plastid. Its subcellular location is the chloroplast. The protein is Small ribosomal subunit protein bS18c of Zygnema circumcarinatum (Green alga).